We begin with the raw amino-acid sequence, 155 residues long: Fibroblast growth factor 1 (155 aa).

A2 is modified (N-acetylalanine). Residues A2–K15 constitute a propeptide that is removed on maturation. The Nuclear localization signal signature appears at K24–K27. Position 33 (N33) interacts with heparin. A heparin-binding region spans residues K127–K143.

The protein belongs to the heparin-binding growth factors family. Monomer. Homodimer. Interacts with FGFR1, FGFR2, FGFR3 and FGFR4. Affinity between fibroblast growth factors (FGFs) and their receptors is increased by heparan sulfate glycosaminoglycans that function as coreceptors. Found in a complex with FGFBP1, FGF1 and FGF2. Interacts with FGFBP1. Part of a Cu(2+)-dependent multiprotein aggregate containing FGF1, S100A13 and SYT1. Interacts with SYT1. Interacts with S100A13. Interacts with LRRC59. Interacts with CSNKA, CSNKB and FIBP. While binding with LRRC59, CSNKA and FIBP seem mutually exclusive, CSNKB and FIBP may cooperatively interact with FGF1. Forms a ternary complex with FGFR1 and ITGAV:ITGB3 and induces the recruitment of PTPN11 to the complex. Post-translationally, in the nucleus, phosphorylated by PKC/PRKCD. In terms of tissue distribution, predominantly expressed in kidney and brain. Detected at much lower levels in heart and skeletal muscle.

The protein resides in the secreted. It localises to the cytoplasm. It is found in the cell cortex. Its subcellular location is the cytosol. The protein localises to the nucleus. Functionally, plays an important role in the regulation of cell survival, cell division, angiogenesis, cell differentiation and cell migration. Functions as a potent mitogen in vitro. Acts as a ligand for FGFR1 and integrins. Binds to FGFR1 in the presence of heparin leading to FGFR1 dimerization and activation via sequential autophosphorylation on tyrosine residues which act as docking sites for interacting proteins, leading to the activation of several signaling cascades. Binds to integrin ITGAV:ITGB3. Its binding to integrin, subsequent ternary complex formation with integrin and FGFR1, and the recruitment of PTPN11 to the complex are essential for FGF1 signaling. Induces the phosphorylation and activation of FGFR1, FRS2, MAPK3/ERK1, MAPK1/ERK2 and AKT1. Can induce angiogenesis. This is Fibroblast growth factor 1 (FGF1) from Homo sapiens (Human).